The primary structure comprises 130 residues: Small ribosomal subunit protein uS9 (130 aa).

Residues 98–130 (LKRAGLLTRDPRMKERKKPGLKKARRSPQFSKR) form a disordered region. The segment covering 111–130 (KERKKPGLKKARRSPQFSKR) has biased composition (basic residues).

It belongs to the universal ribosomal protein uS9 family.

The sequence is that of Small ribosomal subunit protein uS9 from Staphylococcus saprophyticus subsp. saprophyticus (strain ATCC 15305 / DSM 20229 / NCIMB 8711 / NCTC 7292 / S-41).